A 579-amino-acid chain; its full sequence is MFS-type transporter olcL (579 aa).

Residues methionine 1 to threonine 24 are compositionally biased toward polar residues. Residues methionine 1–aspartate 75 form a disordered region. A compositionally biased stretch (basic and acidic residues) spans valine 25–threonine 35. Residues serine 36 to glutamine 54 are compositionally biased toward polar residues. N-linked (GlcNAc...) asparagine glycosylation is present at asparagine 45. The next 9 membrane-spanning stretches (helical) occupy residues leucine 85 to isoleucine 105, glycine 121 to phenylalanine 141, alanine 159 to isoleucine 179, isoleucine 183 to valine 203, leucine 214 to threonine 234, tryptophan 241 to phenylalanine 261, leucine 282 to glycine 302, serine 310 to valine 330, and leucine 355 to phenylalanine 375. A glycan (N-linked (GlcNAc...) asparagine) is linked at asparagine 380. Transmembrane regions (helical) follow at residues leucine 388–valine 408, isoleucine 411–leucine 431, phenylalanine 439–leucine 459, isoleucine 479–phenylalanine 501, and phenylalanine 553–isoleucine 573.

Belongs to the major facilitator superfamily. TCR/Tet family.

The protein localises to the peroxisome membrane. Its function is as follows. MFS-type transporter; part of the gene cluster that mediates the biosynthesis of 15-deoxyoxalicine B. The first step of the pathway is the synthesis of nicotinyl-CoA from nicotinic acid by the nicotinic acid-CoA ligase olcI. Nicotinyl-CoA is then a substrate of polyketide synthase olcA to produce 4-hydroxy-6-(3-pyridinyl)-2H-pyran-2-one (HPPO) which is further prenylated by the polyprenyl transferase olcH to yield geranylgeranyl-HPPO. Geranylgeranyl pyrophosphate is provided by the cluster-specific geranylgeranyl pyrophosphate synthase olcC. The FAD-dependent monooxygenase olcE catalyzes the epoxidation of geranylgeranyl-HPPO and the terpene cyclase olcD catalyzes the cyclization of the terpenoid component, resulting in the formation of the tricyclic terpene moiety seen in predecaturin E. The cytochrome P450 monooxygenase then catalyzes the allylic oxidation of predecaturin E, which is followed by spirocylization with concomitant loss of one molecule of water to form decaturin E. Decaturin E is the substrate of the cytochrome P450 monooxygenase olcJ which hydroxylates it at the C-29 position to form decaturin F. The short-chain dehydrogenase/reductase olcF may catalyze the oxidation of decaturin F to generate the 29-hydroxyl-27-one intermediate, and subsequent hemiacetal formation probably leads to the formation of decaturin C. The dioxygenase olcK may be a peroxisomal enzyme that catalyzes the hydroxylation of decaturin C into decaturin A once decaturin C is shuttled into the peroxisome by the MFS transporter olcL. Finally the cytochrome P450 monooxygenase olcB catalyzes the oxidative rearrangement to yield 15-deoxyoxalicine B. In the absence of olcJ, decaturin E may be shunted to a pathway in which it is oxidized to a ketone, possibly by olcF, to form decaturin D, which undergoes further allylic oxidation to yield decaturin G. Moreover, in the absence of oclK or oclL, oclB can convert decaturin C into 15-deoxyoxalicine A. In Penicillium canescens, this protein is MFS-type transporter olcL.